The following is a 458-amino-acid chain: Tetracycline resistance protein (458 aa).

12 helical membrane-spanning segments follow: residues 12–33 (HNQI…EMVL), 81–100 (LLLF…FVGH), 111–129 (FIQG…VVVA), 140–162 (AFGL…VGMI), 165–185 (YIHW…VPFL), 201–221 (IKGI…TTSY), 223–240 (ISFL…VKHI), 256–276 (ILFM…AGFV), 297–317 (VIIF…GILV), 324–344 (YVLN…FFLL), 346–365 (TTSW…LSFT), and 432–451 (LLLL…VNVY).

Belongs to the major facilitator superfamily. TCR/Tet family.

It is found in the cell membrane. Functionally, resistance to tetracycline by an active tetracycline efflux. This is an energy-dependent process that decreases the accumulation of the antibiotic in whole cells. This protein functions as a metal-tetracycline/H(+) antiporter. This chain is Tetracycline resistance protein (tet), found in Streptococcus agalactiae.